Reading from the N-terminus, the 599-residue chain is Flap endonuclease GEN-like 1 (599 aa).

An N-domain region spans residues 1-96 (MGVGGNFWDL…ISRFFRSSGI (96 aa)). Residues 2-95 (GVGGNFWDLL…RISRFFRSSG (94 aa)) are XPG-N domain. 7 residues coordinate Mg(2+): D31, D75, E140, E142, D161, D163, and D213. The XPG-I domain stretch occupies residues 128–213 (ELLGIPVLKA…IAISLLVGND (86 aa)). The segment at 128–217 (ELLGIPVLKA…LLVGNDYDSG (90 aa)) is I-domain. Residues 213–407 (DYDSGGVLGI…LLPMLSTIYL (195 aa)) are 5'-3' exonuclease domain. Disordered stretches follow at residues 522 to 545 (RESKKKNVSEEETATPRATTMGVQ) and 559 to 599 (AAGQ…LLFG). 2 stretches are compositionally biased toward polar residues: residues 563–572 (SIETGGSSKA) and 580–590 (ATSTSSSNLTK).

It belongs to the XPG/RAD2 endonuclease family. GEN subfamily. Requires Mg(2+) as cofactor.

The protein localises to the nucleus. Its function is as follows. Endonuclease which cleaves flap structures at the junction between single-stranded DNA and double-stranded DNA with a specific cleavage site in the 5' overhang strand exactly one nucleotide 3' of the branch point. Structure- and sequence-specific nuclease that resolves holliday junctions (HJs) by symmetrically oriented incisions in two opposing strands near the junction point, thus leading to ligatable products; HJs are physical links between homologous DNA molecules that arise as central intermediary structures during homologous recombination and repair in meiotic and somatic cells. Structure-specific nuclease with 5'-flap endonuclease activity, preferentially cleaving static flaps 5' overhang strand exactly one nucleotide in the 3' direction of the branch point. Also able to cleave double-stranded flap strand 1 exactly at the branch point. The polypeptide is Flap endonuclease GEN-like 1 (Arabidopsis thaliana (Mouse-ear cress)).